Consider the following 238-residue polypeptide: Lytic polysaccharide monooxygenase NCU01050 (238 aa).

The first 15 residues, 1-15, serve as a signal peptide directing secretion; that stretch reads MKVLAPLVLASAASA. H16 lines the Cu(2+) pocket. Residue E45 coordinates O2. 2 disulfides stabilise this stretch: C54/C186 and C156/C238. N75 carries N-linked (GlcNAc...) asparagine glycosylation. H99 contributes to the Cu(2+) binding site. H172 and Q181 together coordinate O2. The active-site Proton donor is the H172. Y183 contributes to the Cu(2+) binding site.

Belongs to the polysaccharide monooxygenase AA9 family. As to quaternary structure, monomer. Cu(2+) serves as cofactor. In terms of processing, N-linked glycans containing mannose and N-acetylglucosamine.

The protein resides in the secreted. It carries out the reaction [(1-&gt;4)-beta-D-glucosyl]n+m + reduced acceptor + O2 = 4-dehydro-beta-D-glucosyl-[(1-&gt;4)-beta-D-glucosyl]n-1 + [(1-&gt;4)-beta-D-glucosyl]m + acceptor + H2O.. The protein operates within glycan metabolism; cellulose degradation. With respect to regulation, inhibited by increasing levels of ascorbic acid. In terms of biological role, catalyzes the oxidative cleavage of glycosidic bonds in cellulosic substrates via a copper-dependent mechanism. In the presence of an exogenous reductant ascorbic acid, degrades phosphoric acid swollen cellulose (PASC) to cello-oligosaccharides and 4-ketoaldoses, the end products oxidized at the non-reducing end. Somewhat active toward tamarind xyloglucan and konjac glucomannan, with improved activity with glucomannan in the presence of PASC. H(2)O(2) is able to substitute for O(2) in reactions with PASC, xyloglucan and glucomannan. Very weak activity on cellopentaose. No activity with birchwood xylan or ivory nut mannan. Disrupts plant cell wall polysaccharide substrates, such as recalcitrant crystalline cellulose. This is Lytic polysaccharide monooxygenase NCU01050 from Neurospora crassa (strain ATCC 24698 / 74-OR23-1A / CBS 708.71 / DSM 1257 / FGSC 987).